Reading from the N-terminus, the 449-residue chain is Tubulin alpha-8 chain (449 aa).

Residues 1-4 carry the MREC motif motif; the sequence is MREC. GTP contacts are provided by Gln11, Glu71, Ser140, Gly144, Thr145, Thr179, Asn206, and Asn228. A Mg(2+)-binding site is contributed by Glu71. The active site involves Glu254.

It belongs to the tubulin family. Dimer of alpha and beta chains. A typical microtubule is a hollow water-filled tube with an outer diameter of 25 nm and an inner diameter of 15 nM. Alpha-beta heterodimers associate head-to-tail to form protofilaments running lengthwise along the microtubule wall with the beta-tubulin subunit facing the microtubule plus end conferring a structural polarity. Microtubules usually have 13 protofilaments but different protofilament numbers can be found in some organisms and specialized cells. The cofactor is Mg(2+). In terms of processing, some glutamate residues at the C-terminus are polyglycylated, resulting in polyglycine chains on the gamma-carboxyl group. Glycylation is mainly limited to tubulin incorporated into axonemes (cilia and flagella) whereas glutamylation is prevalent in neuronal cells, centrioles, axonemes, and the mitotic spindle. Both modifications can coexist on the same protein on adjacent residues, and lowering polyglycylation levels increases polyglutamylation, and reciprocally. Cilia and flagella glycylation is required for their stability and maintenance. Flagella glycylation controls sperm motility. Some glutamate residues at the C-terminus are polyglutamylated, resulting in polyglutamate chains on the gamma-carboxyl group. Polyglutamylation plays a key role in microtubule severing by spastin (SPAST). SPAST preferentially recognizes and acts on microtubules decorated with short polyglutamate tails: severing activity by SPAST increases as the number of glutamates per tubulin rises from one to eight, but decreases beyond this glutamylation threshold. Glutamylation is also involved in cilia motility. Post-translationally, the C-terminal phenylalanine residue is cleaved by MATCAP1/KIAA0895L.

It is found in the cytoplasm. The protein localises to the cytoskeleton. It catalyses the reaction GTP + H2O = GDP + phosphate + H(+). Tubulin is the major constituent of microtubules, a cylinder consisting of laterally associated linear protofilaments composed of alpha- and beta-tubulin heterodimers. Microtubules grow by the addition of GTP-tubulin dimers to the microtubule end, where a stabilizing cap forms. Below the cap, tubulin dimers are in GDP-bound state, owing to GTPase activity of alpha-tubulin. The protein is Tubulin alpha-8 chain (Tuba8) of Rattus norvegicus (Rat).